Consider the following 117-residue polypeptide: Non-specific lipid-transfer protein 1 (117 aa).

An N-terminal signal peptide occupies residues 1-26 (MARAQVLLMAAALVLMLTAAPRAAVA). Cystine bridges form between C29/C76, C39/C53, C54/C99, and C74/C113. A lipid anchor (Cis-14-hydroxy-10,13-dioxo-7-heptadecenoic acid aspartate ester) is attached at D33.

The protein belongs to the plant LTP family. In terms of tissue distribution, aleurone layer of developing and germinating seeds.

Its function is as follows. Plant non-specific lipid-transfer proteins transfer phospholipids as well as galactolipids across membranes. May play a role in wax or cutin deposition in the cell walls of expanding epidermal cells and certain secretory tissues. The polypeptide is Non-specific lipid-transfer protein 1 (LTP1) (Hordeum vulgare (Barley)).